The chain runs to 402 residues: Argininosuccinate synthase (402 aa).

Residues 9 to 17 (AYSGGLDTS) and Ala-36 contribute to the ATP site. L-citrulline-binding residues include Tyr-87 and Ser-92. Residue Gly-117 coordinates ATP. L-aspartate-binding residues include Thr-119, Asn-123, and Asp-124. Asn-123 contacts L-citrulline. Residues Arg-127, Ser-176, Ser-185, Glu-261, and Tyr-273 each contribute to the L-citrulline site.

This sequence belongs to the argininosuccinate synthase family. Type 1 subfamily. As to quaternary structure, homotetramer.

The protein localises to the cytoplasm. It catalyses the reaction L-citrulline + L-aspartate + ATP = 2-(N(omega)-L-arginino)succinate + AMP + diphosphate + H(+). Its pathway is amino-acid biosynthesis; L-arginine biosynthesis; L-arginine from L-ornithine and carbamoyl phosphate: step 2/3. This is Argininosuccinate synthase from Deinococcus radiodurans (strain ATCC 13939 / DSM 20539 / JCM 16871 / CCUG 27074 / LMG 4051 / NBRC 15346 / NCIMB 9279 / VKM B-1422 / R1).